Reading from the N-terminus, the 210-residue chain is Glutathione S-transferase P (210 aa).

The GST N-terminal domain maps to Pro2–Gly81. Tyr4 bears the Phosphotyrosine; by EGFR mark. Residues Tyr8, Arg14, Trp39, Lys45, and Gln52 to Leu53 contribute to the glutathione site. Phosphothreonine is present on Thr62. A glutathione-binding site is contributed by Gln65–Ser66. Residues Asp83 to Ile204 form the GST C-terminal domain. 2 positions are modified to N6-succinyllysine: Lys103 and Lys116. Lys128 bears the N6-acetyllysine mark.

Belongs to the GST superfamily. Pi family. As to quaternary structure, homodimer. Interacts with CDK5.

The protein resides in the cytoplasm. It is found in the mitochondrion. Its subcellular location is the nucleus. It catalyses the reaction RX + glutathione = an S-substituted glutathione + a halide anion + H(+). It carries out the reaction prostaglandin J2 + glutathione = prostaglandin J2-S-(R)-glutathione. The catalysed reaction is prostaglandin J2 + glutathione = prostaglandin J2-S-(S)-glutathione. The enzyme catalyses prostaglandin A2 + glutathione = prostaglandin A2-S-(S)-glutathione. It catalyses the reaction 11(S)-hydroxy-14(S),15(S)-epoxy-(5Z,8Z,12E)-eicosatrienoate + glutathione = (11S,15S)-dihydroxy-14(R)-S-glutathionyl-(5Z,8Z,12E)-eicosatrienoate. Functionally, conjugation of reduced glutathione to a wide number of exogenous and endogenous hydrophobic electrophiles. Involved in the formation of glutathione conjugates of both prostaglandin A2 (PGA2) and prostaglandin J2 (PGJ2). Participates in the formation of novel hepoxilin regioisomers. Negatively regulates CDK5 activity via p25/p35 translocation to prevent neurodegeneration. The polypeptide is Glutathione S-transferase P (GSTP1) (Bos taurus (Bovine)).